The following is a 211-amino-acid chain: uncharacterized protein (211 aa).

7 residues coordinate Zn(2+): His54, His56, Asp58, His59, His129, Asp148, and His189.

The protein belongs to the metallo-beta-lactamase superfamily. Glyoxalase II family. Zn(2+) is required as a cofactor.

This is an uncharacterized protein from Aquifex aeolicus (strain VF5).